The following is a 376-amino-acid chain: MQIITCKAVVCWAAGEPPVVEEILVEPPRSGEVRIKILFASLCHTDVLACKGFPTPMFPRVLGHEGVGVVECVGEGVSELREGDVVIPTYLGECGECENCESGRTNLCRTYPLQAFTGLMPDGSSRMSSAKGGEMLYQFLSCSTWSEYTVIDANYAVKIDSRIPLPHASFLSCGFTTGFGATWKEAKLQEGSSTVAVLGLGAVGLGAVEGARVQGVTQIIGIDINDNKREKGEAFGMTHFINPKKDNNKSISELVKELTKGQGVDVCFECTGVPDLVNEALESTKIGTGNMIMLGAGTQKSMTINFVSLLGCRTFKYSVFGGVKVQSDLPLIIQKCLNKEIQKIEQLLTHQVQLEDINRAFELLKEPDCVKVLITL.

Zn(2+) contacts are provided by C43, T45, H64, C94, C97, C100, C108, and C173. NAD(+) is bound at residue T45. T45 and H64 together coordinate substrate. Residues 199 to 204, D223, K228, 294 to 296, F320, and K371 each bind NAD(+); these read GLGAVG and LGA.

This sequence belongs to the zinc-containing alcohol dehydrogenase family. Class-III subfamily. As to quaternary structure, homodimer. The cofactor is Zn(2+).

The protein operates within alkaloid biosynthesis. In terms of biological role, may be a positive catalyzer of strictosidine production by assisting secologanin biosynthesis, thus being involved in monoterpene indole alkaloids accumulation. This is CYP enzymes assisting alcohol dehydrogenase from Catharanthus roseus (Madagascar periwinkle).